Reading from the N-terminus, the 31-residue chain is Cyclotide cter-J (31 aa).

The segment at residues 1 to 31 is a cross-link (cyclopeptide (Gly-Asp)); it reads GTVPCGESCVFIPCITGIAGCSCKNKVCYID. Disulfide bonds link cysteine 5–cysteine 21, cysteine 9–cysteine 23, and cysteine 14–cysteine 28.

Post-translationally, contains 3 disulfide bonds. This is a cyclic peptide.

Functionally, probably participates in a plant defense mechanism. This chain is Cyclotide cter-J, found in Clitoria ternatea (Butterfly pea).